The following is a 496-amino-acid chain: MWQLVFLTLSCDLAVATAHSGSRKGMDIAAGKKQYQVQHGACSYTFLLPETDHCRSPSSAYVPNAVQRDAPLDYDDSVQRLQVLENIMENNTQWLMKLENYIQDNMKKEMVEIQQNAVQNQTAVMIEIGTNLLNQTAEQTRKLTDVEAQVLNQTTRLELQLLEHSLSTNKLEKQILDQTSEISKLQDKNSFLEKKVLDMEDKHIVQLRSIKEEKDQLQVLVSKQNSIIEELEKQLVTATVNNSVLQKQQHDLMETVNNLLTLMSTSNPSYSLLAKDEQIIFRDCGEAFKSGLTTSGVYTLTFPNSTEEIKAYCDMETGGGGWTVIQRREDGSVDFQRTWKEYKVGFGNPSGEHWLGNEFVSQVTGQKRYVLKIHLRDWEGNEAYSLYDHFYLSNEELNYRIHLKGLTGTAGKISSISQPGNDFSTKDADNDKCICKCSQMLTGGWWFDACGPSNLNGMYYPQRQNTNKFNGIKWYYWKGSGYSLKATTMMIRPADF.

A signal peptide spans 1–18 (MWQLVFLTLSCDLAVATA). N-linked (GlcNAc...) asparagine glycosylation is found at Asn-90, Asn-120, Asn-134, Asn-152, Asn-241, and Asn-304. Positions 167–249 (STNKLEKQIL…VNNSVLQKQQ (83 aa)) form a coiled coil. One can recognise a Fibrinogen C-terminal domain in the interval 275–495 (KDEQIIFRDC…ATTMMIRPAD (221 aa)). Residues Cys-284 and Cys-313 are joined by a disulfide bond. Ca(2+) is bound by residues Asp-429, Asp-431, Cys-433, and Cys-435. 2 cysteine pairs are disulfide-bonded: Cys-433/Cys-435 and Cys-437/Cys-450.

Interacts with TEK/TIE2, competing for the same binding site as ANGPT1. Interacts with ITGA5. Interacts with SVEP1/polydom. Interacts with THBD; this interaction significantly inhibits the generation of activated PC and TAFIa/CPB2 by the thrombin/thrombomodulin complex.

The protein localises to the secreted. Its function is as follows. Binds to TEK/TIE2, competing for the ANGPT1 binding site, and modulating ANGPT1 signaling. Can induce tyrosine phosphorylation of TEK/TIE2 in the absence of ANGPT1. In the absence of angiogenic inducers, such as VEGF, ANGPT2-mediated loosening of cell-matrix contacts may induce endothelial cell apoptosis with consequent vascular regression. In concert with VEGF, it may facilitate endothelial cell migration and proliferation, thus serving as a permissive angiogenic signal. Involved in the regulation of lymphangiogenesis. This chain is Angiopoietin-2 (ANGPT2), found in Bos taurus (Bovine).